We begin with the raw amino-acid sequence, 362 residues long: Phosphoserine aminotransferase (362 aa).

L-glutamate is bound by residues S9 and R42. Residues 76 to 77 (GR), W102, T153, D174, and Q197 each bind pyridoxal 5'-phosphate. K198 bears the N6-(pyridoxal phosphate)lysine mark. A pyridoxal 5'-phosphate-binding site is contributed by 239–240 (NT).

It belongs to the class-V pyridoxal-phosphate-dependent aminotransferase family. SerC subfamily. In terms of assembly, homodimer. It depends on pyridoxal 5'-phosphate as a cofactor.

The protein localises to the cytoplasm. It carries out the reaction O-phospho-L-serine + 2-oxoglutarate = 3-phosphooxypyruvate + L-glutamate. It catalyses the reaction 4-(phosphooxy)-L-threonine + 2-oxoglutarate = (R)-3-hydroxy-2-oxo-4-phosphooxybutanoate + L-glutamate. The protein operates within amino-acid biosynthesis; L-serine biosynthesis; L-serine from 3-phospho-D-glycerate: step 2/3. It participates in cofactor biosynthesis; pyridoxine 5'-phosphate biosynthesis; pyridoxine 5'-phosphate from D-erythrose 4-phosphate: step 3/5. Functionally, catalyzes the reversible conversion of 3-phosphohydroxypyruvate to phosphoserine and of 3-hydroxy-2-oxo-4-phosphonooxybutanoate to phosphohydroxythreonine. The protein is Phosphoserine aminotransferase of Escherichia coli O17:K52:H18 (strain UMN026 / ExPEC).